We begin with the raw amino-acid sequence, 124 residues long: MATVNQLVRKPRARKVAKSNVPALEACPQKRGVCTRVYTTTPRKPNSALRKVCRVRLTNGFEVTSYIGGEGHNLQEHSVILIRGGRVKDLPGVRYHTVRGALDCSGVKDRKQARSKYGVKRPKA.

A 3-methylthioaspartic acid modification is found at D89. K108 is modified (N6-acetyllysine).

It belongs to the universal ribosomal protein uS12 family. Part of the 30S ribosomal subunit. Contacts proteins S8 and S17. May interact with IF1 in the 30S initiation complex.

Functionally, with S4 and S5 plays an important role in translational accuracy. Its function is as follows. Interacts with and stabilizes bases of the 16S rRNA that are involved in tRNA selection in the A site and with the mRNA backbone. Located at the interface of the 30S and 50S subunits, it traverses the body of the 30S subunit contacting proteins on the other side and probably holding the rRNA structure together. The combined cluster of proteins S8, S12 and S17 appears to hold together the shoulder and platform of the 30S subunit. The polypeptide is Small ribosomal subunit protein uS12 (Escherichia coli (strain K12 / MC4100 / BW2952)).